We begin with the raw amino-acid sequence, 473 residues long: Ribulose bisphosphate carboxylase large chain (473 aa).

Positions 1-2 are excised as a propeptide; that stretch reads MS. Pro3 is subject to N-acetylproline. Lys14 is subject to N6,N6,N6-trimethyllysine. Asn123 and Thr173 together coordinate substrate. Residue Lys175 is the Proton acceptor of the active site. Lys177 serves as a coordination point for substrate. The Mg(2+) site is built by Lys201, Asp203, and Glu204. Lys201 bears the N6-carboxylysine mark. Residue His294 is the Proton acceptor of the active site. Residues Arg295, His327, and Ser379 each contribute to the substrate site.

This sequence belongs to the RuBisCO large chain family. Type I subfamily. In terms of assembly, heterohexadecamer of 8 large chains and 8 small chains; disulfide-linked. The disulfide link is formed within the large subunit homodimers. Mg(2+) is required as a cofactor. The disulfide bond which can form in the large chain dimeric partners within the hexadecamer appears to be associated with oxidative stress and protein turnover.

The protein localises to the plastid. It is found in the chloroplast. It catalyses the reaction 2 (2R)-3-phosphoglycerate + 2 H(+) = D-ribulose 1,5-bisphosphate + CO2 + H2O. It carries out the reaction D-ribulose 1,5-bisphosphate + O2 = 2-phosphoglycolate + (2R)-3-phosphoglycerate + 2 H(+). In terms of biological role, ruBisCO catalyzes two reactions: the carboxylation of D-ribulose 1,5-bisphosphate, the primary event in carbon dioxide fixation, as well as the oxidative fragmentation of the pentose substrate in the photorespiration process. Both reactions occur simultaneously and in competition at the same active site. This chain is Ribulose bisphosphate carboxylase large chain, found in Vigna unguiculata (Cowpea).